A 420-amino-acid polypeptide reads, in one-letter code: Calsequestrin-1 (420 aa).

The signal sequence occupies residues 1–22 (MKGPWLVLAALCLSLANLGPRG). Asparagine 338 carries N-linked (GlcNAc...) asparagine glycosylation. A disordered region spans residues 369-420 (LEGEVNTEDDDDDDDDDDDDDDDDDDDDDDDDDDDDDDDDDDDDDDDDDDDD).

It belongs to the calsequestrin family. As to quaternary structure, monomer; increases in response to a depletion of intracellular calcium. Homodimer. Homotetramer and homopolymer. Can form linear homooligomers. Ca(2+) ions promote oligomerization. In terms of tissue distribution, detected in skeletal muscle (at protein level). Detected in skeletal muscle.

The protein resides in the endoplasmic reticulum. The protein localises to the sarcoplasmic reticulum. Its subcellular location is the sarcoplasmic reticulum lumen. It localises to the sarcoplasmic reticulum membrane. It is found in the mitochondrion matrix. Calsequestrin is a high-capacity, moderate affinity, calcium-binding protein and thus acts as an internal calcium store in muscle. Calcium ions are bound by clusters of acidic residues at the protein surface, often at the interface between subunits. Can bind around 80 Ca(2+) ions. Regulates the release of lumenal Ca(2+) via the calcium release channel RYR1; this plays an important role in triggering muscle contraction. Negatively regulates store-operated Ca(2+) entry (SOCE) activity. The polypeptide is Calsequestrin-1 (Pelophylax lessonae (Pool frog)).